A 343-amino-acid chain; its full sequence is 4-hydroxy-3-methylbut-2-enyl diphosphate reductase (343 aa).

Cys-18 lines the [4Fe-4S] cluster pocket. Positions 47 and 83 each coordinate (2E)-4-hydroxy-3-methylbut-2-enyl diphosphate. Dimethylallyl diphosphate-binding residues include His-47 and His-83. Isopentenyl diphosphate is bound by residues His-47 and His-83. Cys-105 provides a ligand contact to [4Fe-4S] cluster. Residue His-133 participates in (2E)-4-hydroxy-3-methylbut-2-enyl diphosphate binding. His-133 serves as a coordination point for dimethylallyl diphosphate. His-133 contacts isopentenyl diphosphate. Glu-135 (proton donor) is an active-site residue. Residue Thr-174 participates in (2E)-4-hydroxy-3-methylbut-2-enyl diphosphate binding. Cys-204 contacts [4Fe-4S] cluster. Residues Ser-232, Ser-233, Asn-234, and Ser-277 each coordinate (2E)-4-hydroxy-3-methylbut-2-enyl diphosphate. Dimethylallyl diphosphate-binding residues include Ser-232, Ser-233, Asn-234, and Ser-277. Positions 232, 233, 234, and 277 each coordinate isopentenyl diphosphate.

This sequence belongs to the IspH family. [4Fe-4S] cluster serves as cofactor.

It catalyses the reaction isopentenyl diphosphate + 2 oxidized [2Fe-2S]-[ferredoxin] + H2O = (2E)-4-hydroxy-3-methylbut-2-enyl diphosphate + 2 reduced [2Fe-2S]-[ferredoxin] + 2 H(+). It carries out the reaction dimethylallyl diphosphate + 2 oxidized [2Fe-2S]-[ferredoxin] + H2O = (2E)-4-hydroxy-3-methylbut-2-enyl diphosphate + 2 reduced [2Fe-2S]-[ferredoxin] + 2 H(+). It participates in isoprenoid biosynthesis; dimethylallyl diphosphate biosynthesis; dimethylallyl diphosphate from (2E)-4-hydroxy-3-methylbutenyl diphosphate: step 1/1. Its pathway is isoprenoid biosynthesis; isopentenyl diphosphate biosynthesis via DXP pathway; isopentenyl diphosphate from 1-deoxy-D-xylulose 5-phosphate: step 6/6. Its function is as follows. Catalyzes the conversion of 1-hydroxy-2-methyl-2-(E)-butenyl 4-diphosphate (HMBPP) into a mixture of isopentenyl diphosphate (IPP) and dimethylallyl diphosphate (DMAPP). Acts in the terminal step of the DOXP/MEP pathway for isoprenoid precursor biosynthesis. This Bartonella henselae (strain ATCC 49882 / DSM 28221 / CCUG 30454 / Houston 1) (Rochalimaea henselae) protein is 4-hydroxy-3-methylbut-2-enyl diphosphate reductase.